The chain runs to 624 residues: Exonuclease V, mitochondrial (624 aa).

Residues Met-1–Pro-61 constitute a mitochondrion transit peptide. Positions Thr-37 to Glu-80 are disordered. Acidic residues predominate over residues Val-65–Gln-75. Positions 160, 582, 585, and 591 each coordinate [4Fe-4S] cluster.

The protein belongs to the EXO5 family. As to quaternary structure, monomer. It depends on Mg(2+) as a cofactor. The cofactor is [4Fe-4S] cluster.

Its subcellular location is the mitochondrion. Single strand DNA specific 5'exonuclease involved in mitochondrial DNA replication and recombination. Releases dinucleotides as main products of catalysis. Has the capacity to slide across 5'double-stranded DNA or 5'RNA sequences and resumes cutting two nucleotides downstream of the double-stranded-to-single-stranded junction or RNA-to-DNA junction, respectively. This Candida dubliniensis (strain CD36 / ATCC MYA-646 / CBS 7987 / NCPF 3949 / NRRL Y-17841) (Yeast) protein is Exonuclease V, mitochondrial (EXO5).